The sequence spans 297 residues: GTP-binding protein REM 1 (297 aa).

Over residues 1–10 (MTLNTQQEAK) the composition is skewed to polar residues. The disordered stretch occupies residues 1 to 73 (MTLNTQQEAK…DGWSSESSDS (73 aa)). Ser-51 carries the phosphoserine modification. Residues 64–73 (DGWSSESSDS) show a composition bias toward low complexity. GTP is bound by residues 87–94 (GDPGVGKT) and 194–197 (NKAD). A calmodulin-binding region spans residues 267–286 (ARRFLARLTARSARRRALKA).

It belongs to the small GTPase superfamily. RGK family. As to quaternary structure, in vitro, interacts with calmodulin in a calcium-dependent manner. Interacts 14-3-3 family members including YWHAE, YWHAH, YWHAQ, YWHAZ in a phosphorylation-dependent manner. As to expression, high expression in cardiac muscle. Moderate expression in lung, skeletal muscle and kidney. Low levels in spleen and brain.

Promotes endothelial cell sprouting and actin cytoskeletal reorganization. May be involved in angiogenesis. May function in Ca(2+) signaling. The polypeptide is GTP-binding protein REM 1 (Rem1) (Mus musculus (Mouse)).